Reading from the N-terminus, the 295-residue chain is Ankyrin repeat and SOCS box protein 17 (295 aa).

The stretch at 146-176 is one ANK repeat; it reads SGITPLLYVAQTRQSNILKILLQYGILEREN. The region spanning 232 to 295 is the SOCS box domain; it reads LGRRPIISNW…CLQNYLNLES (64 aa).

Belongs to the ankyrin SOCS box (ASB) family.

It participates in protein modification; protein ubiquitination. Functionally, may be a substrate-recognition component of a SCF-like ECS (Elongin-Cullin-SOCS-box protein) E3 ubiquitin-protein ligase complex which mediates the ubiquitination and subsequent proteasomal degradation of target proteins. This is Ankyrin repeat and SOCS box protein 17 (ASB17) from Bos taurus (Bovine).